The following is a 247-amino-acid chain: Probable dihydroorotate dehydrogenase B (NAD(+)), electron transfer subunit (247 aa).

The 87-residue stretch at 1-87 (MLRRVTLKET…RGPYGNGFKE (87 aa)) folds into the FAD-binding FR-type domain. Residues cysteine 200, cysteine 205, cysteine 208, and cysteine 216 each coordinate [2Fe-2S] cluster.

It belongs to the PyrK family. Heterotetramer of 2 PyrK and 2 PyrD type B subunits. [2Fe-2S] cluster serves as cofactor. It depends on FAD as a cofactor.

Its pathway is pyrimidine metabolism; UMP biosynthesis via de novo pathway; orotate from (S)-dihydroorotate (NAD(+) route): step 1/1. Its function is as follows. Responsible for channeling the electrons from the oxidation of dihydroorotate from the FMN redox center in the PyrD type B subunit to the ultimate electron acceptor NAD(+). The chain is Probable dihydroorotate dehydrogenase B (NAD(+)), electron transfer subunit from Pyrococcus horikoshii (strain ATCC 700860 / DSM 12428 / JCM 9974 / NBRC 100139 / OT-3).